We begin with the raw amino-acid sequence, 574 residues long: UvrABC system protein C (574 aa).

Positions 12-92 (KKPGVYIFKN…IYIHKPKYNI (81 aa)) constitute a GIY-YIG domain. Positions 200 to 235 (EEVKNYLQKAMMDYAKIKNYEKAAQMRDTLFKLENL) constitute a UVR domain.

Belongs to the UvrC family. As to quaternary structure, interacts with UvrB in an incision complex.

The protein resides in the cytoplasm. Its function is as follows. The UvrABC repair system catalyzes the recognition and processing of DNA lesions. UvrC both incises the 5' and 3' sides of the lesion. The N-terminal half is responsible for the 3' incision and the C-terminal half is responsible for the 5' incision. The sequence is that of UvrABC system protein C from Petrotoga mobilis (strain DSM 10674 / SJ95).